The chain runs to 845 residues: Beta-mannosidase B (845 aa).

The N-linked (GlcNAc...) asparagine glycan is linked to asparagine 252. Glutamate 432 serves as the catalytic Proton donor. Residues asparagine 717 and asparagine 723 are each glycosylated (N-linked (GlcNAc...) asparagine).

This sequence belongs to the glycosyl hydrolase 2 family. Beta-mannosidase B subfamily.

It carries out the reaction Hydrolysis of terminal, non-reducing beta-D-mannose residues in beta-D-mannosides.. It functions in the pathway glycan metabolism; N-glycan degradation. Functionally, exoglycosidase that cleaves the single beta-linked mannose residue from the non-reducing end of beta-mannosidic oligosaccharides of various complexity and length. Prefers mannobiose over mannotriose and has no activity against polymeric mannan. Is also severely restricted by galactosyl substitutions at the +1 subsite. In Aspergillus fumigatus (strain CBS 144.89 / FGSC A1163 / CEA10) (Neosartorya fumigata), this protein is Beta-mannosidase B (mndB).